The following is a 375-amino-acid chain: Anhydro-N-acetylmuramic acid kinase 1 (375 aa).

Residue 20-27 coordinates ATP; it reads GTSFDGVD. The segment at 351–375 is disordered; sequence APSTTGVAAPVGGGRRSKPGARELS.

It belongs to the anhydro-N-acetylmuramic acid kinase family.

It carries out the reaction 1,6-anhydro-N-acetyl-beta-muramate + ATP + H2O = N-acetyl-D-muramate 6-phosphate + ADP + H(+). Its pathway is amino-sugar metabolism; 1,6-anhydro-N-acetylmuramate degradation. It functions in the pathway cell wall biogenesis; peptidoglycan recycling. Its function is as follows. Catalyzes the specific phosphorylation of 1,6-anhydro-N-acetylmuramic acid (anhMurNAc) with the simultaneous cleavage of the 1,6-anhydro ring, generating MurNAc-6-P. Is required for the utilization of anhMurNAc either imported from the medium or derived from its own cell wall murein, and thus plays a role in cell wall recycling. The chain is Anhydro-N-acetylmuramic acid kinase 1 from Jannaschia sp. (strain CCS1).